The primary structure comprises 391 residues: Elongation factor Tu (391 aa).

In terms of domain architecture, tr-type G spans 10–201; it reads KPHVNIGTIG…AVDEYIPTPA (192 aa). Positions 19-26 are G1; the sequence is GHVDHGKT. Position 19 to 26 (19 to 26) interacts with GTP; the sequence is GHVDHGKT. Threonine 26 contributes to the Mg(2+) binding site. A G2 region spans residues 55-59; sequence GITIS. Residues 76–79 form a G3 region; the sequence is DCPG. Residues 76-80 and 131-134 contribute to the GTP site; these read DCPGH and NKVD. Positions 131–134 are G4; that stretch reads NKVD. The interval 169 to 171 is G5; the sequence is SAL.

Belongs to the TRAFAC class translation factor GTPase superfamily. Classic translation factor GTPase family. EF-Tu/EF-1A subfamily. In terms of assembly, monomer.

The protein resides in the cytoplasm. The enzyme catalyses GTP + H2O = GDP + phosphate + H(+). GTP hydrolase that promotes the GTP-dependent binding of aminoacyl-tRNA to the A-site of ribosomes during protein biosynthesis. This chain is Elongation factor Tu, found in Jannaschia sp. (strain CCS1).